We begin with the raw amino-acid sequence, 129 residues long: Omega-scoloptoxin(05)-Ssm1a (129 aa).

The first 24 residues, 1-24 (MPSLCIIALFGTLTFYTLIPSIHT), serve as a signal peptide directing secretion. A propeptide spanning residues 25–46 (LKCVRCDGPMSNYDCKTTYPAA) is cleaved from the precursor.

The protein belongs to the scoloptoxin-05 family. Post-translationally, contains 3 disulfide bonds. In terms of tissue distribution, expressed by the venom gland.

Its subcellular location is the secreted. In terms of biological role, toxin that increase voltage-gated calcium channel (Cav) currents in DRG neurons by 70% and 120%, when 1 uM and 10 uM are tested, respectively. The polypeptide is Omega-scoloptoxin(05)-Ssm1a (Scolopendra mutilans (Chinese red-headed centipede)).